The primary structure comprises 766 residues: Dipeptidyl peptidase 4 (766 aa).

Over 1–6 the chain is Cytoplasmic; that stretch reads MKTPWK. Residues 7–28 form a helical; Signal-anchor for type II membrane protein membrane-spanning segment; the sequence is VLLGLLGAAALVTIITVPVVLL. Over 29–766 the chain is Extracellular; the sequence is NKGTDDATAD…HFIKQCFSLP (738 aa). 7 N-linked (GlcNAc...) asparagine glycosylation sites follow: Asn85, Asn92, Asn150, Asn219, Asn229, Asn281, and Asn321. 4 disulfide bridges follow: Cys328–Cys339, Cys385–Cys394, Cys444–Cys447, and Cys454–Cys472. Asn520 carries N-linked (GlcNAc...) asparagine glycosylation. The Charge relay system role is filled by Ser630. An intrachain disulfide couples Cys649 to Cys762. Asn685 is a glycosylation site (N-linked (GlcNAc...) asparagine). Active-site charge relay system residues include Asp708 and His740.

The protein belongs to the peptidase S9B family. DPPIV subfamily. In terms of assembly, monomer. Homodimer. Heterodimer with Seprase (FAP). Requires homodimerization for optimal dipeptidyl peptidase activity and T-cell costimulation. Found in a membrane raft complex, at least composed of BCL10, CARD11, DPP4 and IKBKB. Associates with collagen. Interacts with PTPRC; the interaction is enhanced in an interleukin-12-dependent manner in activated lymphocytes. Interacts (via extracellular domain) with ADA; does not inhibit its dipeptidyl peptidase activity. Interacts with CAV1 (via the N-terminus); the interaction is direct. Interacts (via cytoplasmic tail) with CARD11 (via PDZ domain); its homodimerization is necessary for interaction with CARD11. Interacts with IGF2R; the interaction is direct. Interacts with GPC3. Interacts with human coronavirus-EMC spike protein and acts as a receptor for this virus. (Microbial infection) Interacts with MERS coronavirus/MERS-CoV spike protein. In terms of processing, the soluble form (Dipeptidyl peptidase 4 soluble form also named SDPP) derives from the membrane form (Dipeptidyl peptidase 4 membrane form also named MDPP) by proteolytic processing. N- and O-Glycosylated. Post-translationally, phosphorylated. Mannose 6-phosphate residues in the carbohydrate moiety are necessary for interaction with IGF2R in activated T-cells. Mannose 6-phosphorylation is induced during T-cell activation. In terms of tissue distribution, expressed specifically in lymphatic vessels but not in blood vessels in the skin, small intestine, esophagus, ovary, breast and prostate glands. Not detected in lymphatic vessels in the lung, kidney, uterus, liver and stomach (at protein level). Expressed in the poorly differentiated crypt cells of the small intestine as well as in the mature villous cells. Expressed at very low levels in the colon.

It localises to the secreted. The protein localises to the cell membrane. The protein resides in the apical cell membrane. It is found in the cell projection. Its subcellular location is the invadopodium membrane. It localises to the lamellipodium membrane. The protein localises to the cell junction. The protein resides in the membrane raft. The catalysed reaction is Release of an N-terminal dipeptide, Xaa-Yaa-|-Zaa-, from a polypeptide, preferentially when Yaa is Pro, provided Zaa is neither Pro nor hydroxyproline.. Inhibited by GPC3 and diprotin A. Functionally, cell surface glycoprotein receptor involved in the costimulatory signal essential for T-cell receptor (TCR)-mediated T-cell activation. Acts as a positive regulator of T-cell coactivation, by binding at least ADA, CAV1, IGF2R, and PTPRC. Its binding to CAV1 and CARD11 induces T-cell proliferation and NF-kappa-B activation in a T-cell receptor/CD3-dependent manner. Its interaction with ADA also regulates lymphocyte-epithelial cell adhesion. In association with FAP is involved in the pericellular proteolysis of the extracellular matrix (ECM), the migration and invasion of endothelial cells into the ECM. May be involved in the promotion of lymphatic endothelial cells adhesion, migration and tube formation. When overexpressed, enhanced cell proliferation, a process inhibited by GPC3. Also acts as a serine exopeptidase with a dipeptidyl peptidase activity that regulates various physiological processes by cleaving peptides in the circulation, including many chemokines, mitogenic growth factors, neuropeptides and peptide hormones such as brain natriuretic peptide 32. Removes N-terminal dipeptides sequentially from polypeptides having unsubstituted N-termini provided that the penultimate residue is proline. (Microbial infection) Acts as a receptor for human coronavirus MERS-CoV-2. This is Dipeptidyl peptidase 4 from Homo sapiens (Human).